A 379-amino-acid polypeptide reads, in one-letter code: Succinyl-diaminopimelate desuccinylase (379 aa).

His70 is a Zn(2+) binding site. The active site involves Asp72. Zn(2+) is bound at residue Asp103. Residue Glu137 is the Proton acceptor of the active site. Residues Glu138, Glu166, and His352 each contribute to the Zn(2+) site.

Belongs to the peptidase M20A family. DapE subfamily. In terms of assembly, homodimer. Zn(2+) serves as cofactor. The cofactor is Co(2+).

It carries out the reaction N-succinyl-(2S,6S)-2,6-diaminopimelate + H2O = (2S,6S)-2,6-diaminopimelate + succinate. The protein operates within amino-acid biosynthesis; L-lysine biosynthesis via DAP pathway; LL-2,6-diaminopimelate from (S)-tetrahydrodipicolinate (succinylase route): step 3/3. Its function is as follows. Catalyzes the hydrolysis of N-succinyl-L,L-diaminopimelic acid (SDAP), forming succinate and LL-2,6-diaminopimelate (DAP), an intermediate involved in the bacterial biosynthesis of lysine and meso-diaminopimelic acid, an essential component of bacterial cell walls. The polypeptide is Succinyl-diaminopimelate desuccinylase (Burkholderia pseudomallei (strain 1106a)).